A 1020-amino-acid polypeptide reads, in one-letter code: Calcium-transporting ATPase sarcoplasmic/endoplasmic reticulum type (1020 aa).

The Cytoplasmic segment spans residues 1–48 (MEDGHSKTVEQSLNFFGTDPERGLTLDQIKANQKKYGPNELPTEEGKS). A helical membrane pass occupies residues 49 to 69 (IWQLVLEQFDDLLVKILLLAA). Residues 70-89 (IISFVLALFEEHEETFTAFV) are Lumenal-facing. A helical transmembrane segment spans residues 90–110 (EPLVILLILIANAVVGVWQER). Topologically, residues 111 to 253 (NAESAIEALK…EIKTPLQQKL (143 aa)) are cytoplasmic. The residue at position 240 (serine 240) is a Phosphoserine. Residues 254-273 (DEFGEQLSKVISVICVAVWA) traverse the membrane as a helical segment. Over 274–295 (INIGHFNDPAHGGSWIKGAIYY) the chain is Lumenal. The chain crosses the membrane as a helical span at residues 296 to 313 (FKIAVALAVAAIPEGLPA). 4 residues coordinate Ca(2+): valine 304, alanine 305, isoleucine 307, and glutamate 309. Residues 314 to 757 (VITTCLALGT…EEGRAIYNNM (444 aa)) lie on the Cytoplasmic side of the membrane. Aspartate 351 functions as the 4-aspartylphosphate intermediate in the catalytic mechanism. Mg(2+) is bound by residues aspartate 703 and aspartate 707. A helical membrane pass occupies residues 758-777 (KQFIRYLISSNIGEVVSIFL). The Ca(2+) site is built by asparagine 768 and glutamate 771. Topologically, residues 778–787 (TAALGLPEAL) are lumenal. Residues 788–808 (IPVQLLWVNLVTDGLPATALG) traverse the membrane as a helical segment. 3 residues coordinate Ca(2+): asparagine 796, threonine 799, and aspartate 800. The Cytoplasmic portion of the chain corresponds to 809-828 (FNPPDLDIMEKPPRKADEGL). A helical transmembrane segment spans residues 829-851 (ISGWLFFRYMAIGFYVGAATVGA). The Lumenal portion of the chain corresponds to 852 to 897 (AAWWFVFSDEGPKLSYWQLTHHLSCLGGGDEFKGVDCKIFSDPHAM). A helical membrane pass occupies residues 898–917 (TMALSVLVTIEMLNAMNSLS). Position 908 (glutamate 908) interacts with Ca(2+). Topologically, residues 918–930 (ENQSLITMPPWCN) are cytoplasmic. The chain crosses the membrane as a helical span at residues 931-949 (LWLIGSMALSFTLHFVILY). At 950–964 (VDVLSTVFQVTPLSA) the chain is on the lumenal side. Residues 965–985 (EEWITVMKFSIPVVLLDETLK) traverse the membrane as a helical segment. Topologically, residues 986–1020 (FVARKIADGESPIYKMHGIVLMWAVFFGLLYAMML) are cytoplasmic.

This sequence belongs to the cation transport ATPase (P-type) (TC 3.A.3) family. As to quaternary structure, interacts with SclA and SclB.

Its subcellular location is the endoplasmic reticulum membrane. The protein resides in the sarcoplasmic reticulum membrane. It carries out the reaction Ca(2+)(in) + ATP + H2O = Ca(2+)(out) + ADP + phosphate + H(+). This magnesium-dependent enzyme catalyzes the hydrolysis of ATP coupled with the transport of calcium. This Drosophila melanogaster (Fruit fly) protein is Calcium-transporting ATPase sarcoplasmic/endoplasmic reticulum type.